A 374-amino-acid polypeptide reads, in one-letter code: 8-amino-7-oxononanoate synthase (374 aa).

Arginine 22 and arginine 29 together coordinate substrate. Pyridoxal 5'-phosphate is bound at residue 109-110 (GY). Histidine 134 is a binding site for substrate. Pyridoxal 5'-phosphate contacts are provided by residues serine 182, 207 to 210 (DDAH), and 227 to 230 (TLSK). Lysine 230 carries the post-translational modification N6-(pyridoxal phosphate)lysine. Threonine 339 contacts substrate.

Belongs to the class-II pyridoxal-phosphate-dependent aminotransferase family. BioF subfamily. As to quaternary structure, homodimer. The cofactor is pyridoxal 5'-phosphate.

It catalyses the reaction 6-carboxyhexanoyl-[ACP] + L-alanine + H(+) = (8S)-8-amino-7-oxononanoate + holo-[ACP] + CO2. It functions in the pathway cofactor biosynthesis; biotin biosynthesis. Functionally, catalyzes the decarboxylative condensation of pimeloyl-[acyl-carrier protein] and L-alanine to produce 8-amino-7-oxononanoate (AON), [acyl-carrier protein], and carbon dioxide. The protein is 8-amino-7-oxononanoate synthase of Methylobacterium radiotolerans (strain ATCC 27329 / DSM 1819 / JCM 2831 / NBRC 15690 / NCIMB 10815 / 0-1).